We begin with the raw amino-acid sequence, 212 residues long: 3-oxo-tetronate 4-phosphate decarboxylase (212 aa).

Residue E79 is the Proton acceptor of the active site. Positions 79, 98, and 100 each coordinate Zn(2+). The active-site Proton donor is Y125. H165 serves as a coordination point for Zn(2+).

The protein belongs to the aldolase class II family. AraD/FucA subfamily. The cofactor is Zn(2+).

The enzyme catalyses 3-dehydro-4-O-phospho-D-erythronate + H(+) = dihydroxyacetone phosphate + CO2. The catalysed reaction is 3-dehydro-4-O-phospho-L-erythronate + H(+) = dihydroxyacetone phosphate + CO2. Functionally, catalyzes the decarboxylation of 3-oxo-tetronate 4-phosphate to dihydroxyacetone phosphate (DHAP) and CO(2). This Escherichia coli (strain K12) protein is 3-oxo-tetronate 4-phosphate decarboxylase.